We begin with the raw amino-acid sequence, 421 residues long: Medium-chain specific acyl-CoA dehydrogenase, mitochondrial (421 aa).

The transit peptide at 1 to 25 directs the protein to the mitochondrion; it reads MAAALRRGYKVLRSVSHFECRAQHT. N6-acetyllysine; alternate is present on Lys69. An N6-succinyllysine; alternate modification is found at Lys69. An N6-acetyllysine modification is found at Lys79. 158–167 is a binding site for FAD; the sequence is YCVTEPSAGS. Residue Ser167 coordinates octanoyl-CoA. Residue Lys179 is modified to N6-succinyllysine. Position 191 to 193 (191 to 193) interacts with FAD; it reads WIT. An N6-acetyllysine; alternate modification is found at Lys212. Lys212 is subject to N6-succinyllysine; alternate. Ser216 is a binding site for octanoyl-CoA. An N6-acetyllysine; alternate mark is found at Lys217, Lys259, and Lys271. Residues Lys217, Lys259, and Lys271 each carry the N6-succinyllysine; alternate modification. Positions 278 and 281 each coordinate octanoyl-CoA. Residue Lys301 is modified to N6-acetyllysine. Residues 306-308 and 316-317 contribute to the FAD site; these read RKT and HQ. The octanoyl-CoA site is built by Arg349 and Thr351. A Phosphothreonine modification is found at Thr351. 374–378 is a binding site for FAD; sequence QIFGG. Position 401 (Glu401) interacts with octanoyl-CoA. Residue Glu401 is the Proton acceptor of the active site. FAD is bound at residue 402-405; it reads GTAQ.

It belongs to the acyl-CoA dehydrogenase family. In terms of assembly, homotetramer. Interacts with the heterodimeric electron transfer flavoprotein ETF. The cofactor is FAD. Post-translationally, acetylated. Could occur at proximity of the cofactor-binding sites and reduce the catalytic activity. Could be deacetylated by SIRT3.

The protein localises to the mitochondrion matrix. It catalyses the reaction a medium-chain 2,3-saturated fatty acyl-CoA + oxidized [electron-transfer flavoprotein] + H(+) = a medium-chain (2E)-enoyl-CoA + reduced [electron-transfer flavoprotein]. The catalysed reaction is pentanoyl-CoA + oxidized [electron-transfer flavoprotein] + H(+) = (2E)-pentenoyl-CoA + reduced [electron-transfer flavoprotein]. It carries out the reaction hexanoyl-CoA + oxidized [electron-transfer flavoprotein] + H(+) = (2E)-hexenoyl-CoA + reduced [electron-transfer flavoprotein]. The enzyme catalyses octanoyl-CoA + oxidized [electron-transfer flavoprotein] + H(+) = (2E)-octenoyl-CoA + reduced [electron-transfer flavoprotein]. It catalyses the reaction decanoyl-CoA + oxidized [electron-transfer flavoprotein] + H(+) = (2E)-decenoyl-CoA + reduced [electron-transfer flavoprotein]. The catalysed reaction is dodecanoyl-CoA + oxidized [electron-transfer flavoprotein] + H(+) = (2E)-dodecenoyl-CoA + reduced [electron-transfer flavoprotein]. It carries out the reaction tetradecanoyl-CoA + oxidized [electron-transfer flavoprotein] + H(+) = (2E)-tetradecenoyl-CoA + reduced [electron-transfer flavoprotein]. The enzyme catalyses oxidized [electron-transfer flavoprotein] + hexadecanoyl-CoA + H(+) = (2E)-hexadecenoyl-CoA + reduced [electron-transfer flavoprotein]. It functions in the pathway lipid metabolism; mitochondrial fatty acid beta-oxidation. In terms of biological role, medium-chain specific acyl-CoA dehydrogenase is one of the acyl-CoA dehydrogenases that catalyze the first step of mitochondrial fatty acid beta-oxidation, an aerobic process breaking down fatty acids into acetyl-CoA and allowing the production of energy from fats. The first step of fatty acid beta-oxidation consists in the removal of one hydrogen from C-2 and C-3 of the straight-chain fatty acyl-CoA thioester, resulting in the formation of trans-2-enoyl-CoA. Electron transfer flavoprotein (ETF) is the electron acceptor that transfers electrons to the main mitochondrial respiratory chain via ETF-ubiquinone oxidoreductase (ETF dehydrogenase). Among the different mitochondrial acyl-CoA dehydrogenases, medium-chain specific acyl-CoA dehydrogenase acts specifically on acyl-CoAs with saturated 6 to 12 carbons long primary chains. This Rattus norvegicus (Rat) protein is Medium-chain specific acyl-CoA dehydrogenase, mitochondrial.